Consider the following 188-residue polypeptide: Putative manganese efflux pump MntP (188 aa).

Helical transmembrane passes span 2–22 (IMGN…AFAV), 39–59 (LITG…GFLL), 67–87 (ITAI…LNMI), 107–127 (IILS…FAFL), 129–149 (VDIV…SFLG), and 166–186 (LAGG…HLGF).

The protein belongs to the MntP (TC 9.B.29) family.

Its subcellular location is the cell membrane. In terms of biological role, probably functions as a manganese efflux pump. This is Putative manganese efflux pump MntP from Desulfitobacterium hafniense (strain Y51).